A 500-amino-acid polypeptide reads, in one-letter code: Protein O-glucosyltransferase 2 (500 aa).

A signal peptide spans 1 to 22 (MLRKLLLLLMSCIIFLTRRSKA). One copy of the Filamin repeat lies at 23 to 128 (AAAASASKTL…LVGKSPYVLR (106 aa)). 2 N-linked (GlcNAc...) asparagine glycosylation sites follow: N60 and N259. The Prevents secretion from ER motif lies at 497 to 500 (RDEL).

The protein belongs to the KDELC family.

The protein resides in the endoplasmic reticulum lumen. The enzyme catalyses L-seryl-[EGF-like domain protein] + UDP-alpha-D-glucose = 3-O-(beta-D-glucosyl)-L-seryl-[EGF-like domain protein] + UDP + H(+). It carries out the reaction L-seryl-[EGF-like domain protein] + UDP-alpha-D-xylose = 3-O-(beta-D-xylosyl)-L-seryl-[EGF-like domain protein] + UDP + H(+). Its pathway is protein modification; protein glycosylation. Protein glucosyltransferase that catalyzes the transfer of glucose from UDP-glucose to a serine residue within the consensus sequence peptide C-X-N-T-X-G-S-F-X-C. Can also catalyze the transfer of xylose from UDP-xylose but less efficiently. This Danio rerio (Zebrafish) protein is Protein O-glucosyltransferase 2 (poglut2).